Here is a 144-residue protein sequence, read N- to C-terminus: Signal recognition particle 19 kDa protein (144 aa).

Residues 117-144 are disordered; it reads TRTQKTGGGDQSLQQGEGSKKGKGKKKK.

This sequence belongs to the SRP19 family. In terms of assembly, component of a signal recognition particle complex that consists of a 7SL RNA molecule of 300 nucleotides and six protein subunits: SRP72, SRP68, SRP54, SRP19, SRP14 and SRP9. Interacts with IPO5, IPO7, IPO8, KPNB1 and TNPO1. Interactions with IPO8 and TNPO1 may be involved in SRP19 import into the nucleus.

Its subcellular location is the cytoplasm. The protein resides in the nucleus. The protein localises to the nucleolus. It localises to the nucleoplasm. Its function is as follows. Component of the signal recognition particle (SRP) complex, a ribonucleoprotein complex that mediates the cotranslational targeting of secretory and membrane proteins to the endoplasmic reticulum (ER). Binds directly to 7SL RNA. Mediates binding of SRP54 to the SRP complex. The polypeptide is Signal recognition particle 19 kDa protein (Canis lupus familiaris (Dog)).